We begin with the raw amino-acid sequence, 72 residues long: Heat shock factor-binding protein 1-like protein 1 (72 aa).

A coiled-coil region spans residues 12-66; it reads DLLQNAAENLLQEVEEHFQALTATLNLRMEEMGNRIEDLQRNVDDLMAQAGIENS.

This sequence belongs to the HSBP1 family.

This chain is Heat shock factor-binding protein 1-like protein 1 (Hsbp1l1), found in Rattus norvegicus (Rat).